The following is a 313-amino-acid chain: Ribosomal protein uL3 glutamine methyltransferase (313 aa).

This sequence belongs to the protein N5-glutamine methyltransferase family. PrmB subfamily.

The enzyme catalyses L-glutaminyl-[ribosomal protein uL3] + S-adenosyl-L-methionine = N(5)-methyl-L-glutaminyl-[ribosomal protein uL3] + S-adenosyl-L-homocysteine + H(+). Functionally, methylates large ribosomal subunit protein uL3 on a specific glutamine residue. This chain is Ribosomal protein uL3 glutamine methyltransferase, found in Pasteurella multocida (strain Pm70).